The primary structure comprises 713 residues: Polyribonucleotide nucleotidyltransferase (713 aa).

Mg(2+) contacts are provided by Asp-485 and Asp-491. One can recognise a KH domain in the interval 552–611 (PRIYTMKIDPKKIKDVIGKGGATVRSLTEETGTSIDIDDDGTVKIAAVDKNAVQEVMSRI). In terms of domain architecture, S1 motif spans 621-689 (GVVYKGKVTR…RQGRIRLTMK (69 aa)). The tract at residues 694–713 (DQTKNEENLLQSEEGSPVQE) is disordered. Residues 701–713 (NLLQSEEGSPVQE) show a composition bias toward polar residues.

This sequence belongs to the polyribonucleotide nucleotidyltransferase family. In terms of assembly, component of the RNA degradosome, which is a multiprotein complex involved in RNA processing and mRNA degradation. It depends on Mg(2+) as a cofactor.

It is found in the cytoplasm. It catalyses the reaction RNA(n+1) + phosphate = RNA(n) + a ribonucleoside 5'-diphosphate. Involved in mRNA degradation. Catalyzes the phosphorolysis of single-stranded polyribonucleotides processively in the 3'- to 5'-direction. This Histophilus somni (strain 2336) (Haemophilus somnus) protein is Polyribonucleotide nucleotidyltransferase.